The chain runs to 293 residues: Pantothenate synthetase (293 aa).

30–37 contacts ATP; the sequence is MGNLHEGH. Catalysis depends on histidine 37, which acts as the Proton donor. Glutamine 61 serves as a coordination point for (R)-pantoate. A beta-alanine-binding site is contributed by glutamine 61. 149–152 is a binding site for ATP; sequence GEKD. Glutamine 155 is a binding site for (R)-pantoate. Residues valine 178 and 186–189 each bind ATP; that span reads MSSR.

The protein belongs to the pantothenate synthetase family. In terms of assembly, homodimer.

The protein localises to the cytoplasm. The enzyme catalyses (R)-pantoate + beta-alanine + ATP = (R)-pantothenate + AMP + diphosphate + H(+). It functions in the pathway cofactor biosynthesis; (R)-pantothenate biosynthesis; (R)-pantothenate from (R)-pantoate and beta-alanine: step 1/1. Functionally, catalyzes the condensation of pantoate with beta-alanine in an ATP-dependent reaction via a pantoyl-adenylate intermediate. This chain is Pantothenate synthetase, found in Vibrio cholerae serotype O1 (strain ATCC 39541 / Classical Ogawa 395 / O395).